Reading from the N-terminus, the 131-residue chain is MIYDTISDMLTRIRNAYLVKHETVYVLNTKINRKISEILKKEGYIESVNLSTNSLQKLEITLKYLGNQKKPGITNLKRLSWPGLRFYSNYKDIPPVLNGMGVVILSTSKGIMTDREARANKVGGELLCSIW.

It belongs to the universal ribosomal protein uS8 family. Part of the 30S ribosomal subunit.

It localises to the plastid. It is found in the chloroplast. Its function is as follows. One of the primary rRNA binding proteins, it binds directly to 16S rRNA central domain where it helps coordinate assembly of the platform of the 30S subunit. This chain is Small ribosomal subunit protein uS8c (rps8), found in Tupiella akineta (Green alga).